The chain runs to 143 residues: Peptidyl-prolyl cis-trans isomerase B (143 aa).

The region spanning 1-143 (MKTGYFLLED…DVMKEVRVEG (143 aa)) is the PPIase cyclophilin-type domain.

The protein belongs to the cyclophilin-type PPIase family.

It localises to the cytoplasm. It catalyses the reaction [protein]-peptidylproline (omega=180) = [protein]-peptidylproline (omega=0). With respect to regulation, inhibited by cyclosporin A (CsA). In terms of biological role, PPIases accelerate the folding of proteins. It catalyzes the cis-trans isomerization of proline imidic peptide bonds in oligopeptides. The polypeptide is Peptidyl-prolyl cis-trans isomerase B (ppiB) (Bacillus subtilis (strain 168)).